The following is a 317-amino-acid chain: Tetraspanin-15 (317 aa).

Positions 1–43 (MADNAQVVPVEEPAATATATATATATTEPEAKSSDQMESQSDN) are disordered. At 1–60 (MADNAQVVPVEEPAATATATATATATTEPEAKSSDQMESQSDNKPPMGTLMALVNILAAG) the chain is on the cytoplasmic side. Residues 7–28 (VVPVEEPAATATATATATATTE) are compositionally biased toward low complexity. The helical transmembrane segment at 61–81 (VLPIFTFVLSLTLLGYAVWLL) threads the bilayer. At 82 to 96 (YMRSYDCEDILGLPR) the chain is on the extracellular side. A helical transmembrane segment spans residues 97–117 (VQTLASVGLLAVFVVSNAALF). Over 118-126 (LRRKFPMPA) the chain is Cytoplasmic. A helical membrane pass occupies residues 127 to 147 (LVVMVVVLLLMLFIGLAYAGV). The Extracellular segment spans residues 148–287 (NEMQSRRFPA…IRSVRRKWWQ (140 aa)). Asn-224 carries N-linked (GlcNAc...) asparagine glycosylation. A helical transmembrane segment spans residues 288-308 (LGIFLIVISILLLMSHLLIFL). Topologically, residues 309 to 317 (ATFWERFKG) are cytoplasmic.

The protein belongs to the tetraspanin (TM4SF) family.

The protein localises to the membrane. In terms of biological role, may be involved in the regulation of cell differentiation. This is Tetraspanin-15 (TET15) from Arabidopsis thaliana (Mouse-ear cress).